The chain runs to 828 residues: Periplasmic nitrate reductase (828 aa).

Residues 1-31 (MKLSRRSFMKANAVAAAAAAAGLSVPGVARA) constitute a signal peptide (tat-type signal). One can recognise a 4Fe-4S Mo/W bis-MGD-type domain in the interval 39–95 (IKWDKAPCRFCGTGCGVLVGTQQGRVVACQGDPDAPVNRGLNCIKGYFLPKIMYGKD). Cys46, Cys49, Cys53, and Cys81 together coordinate [4Fe-4S] cluster. Residues Lys83, Gln150, Asn175, Cys179, 212 to 219 (WGANMAEM), 243 to 247 (STYQH), 262 to 264 (QSD), Met372, Gln376, Asn482, 508 to 509 (SD), Lys531, Asp558, and 718 to 727 (TGRVLEHWHT) each bind Mo-bis(molybdopterin guanine dinucleotide). Phe794 lines the substrate pocket. Mo-bis(molybdopterin guanine dinucleotide) is bound by residues Asn802 and Lys819.

It belongs to the prokaryotic molybdopterin-containing oxidoreductase family. NasA/NapA/NarB subfamily. Component of the periplasmic nitrate reductase NapAB complex composed of NapA and NapB. Requires [4Fe-4S] cluster as cofactor. The cofactor is Mo-bis(molybdopterin guanine dinucleotide). Predicted to be exported by the Tat system. The position of the signal peptide cleavage has not been experimentally proven.

It localises to the periplasm. The enzyme catalyses 2 Fe(II)-[cytochrome] + nitrate + 2 H(+) = 2 Fe(III)-[cytochrome] + nitrite + H2O. Catalytic subunit of the periplasmic nitrate reductase complex NapAB. Receives electrons from NapB and catalyzes the reduction of nitrate to nitrite. The sequence is that of Periplasmic nitrate reductase from Escherichia coli O9:H4 (strain HS).